The sequence spans 226 residues: Putative pyridoxamine 5'-phosphate oxidase (226 aa).

16-19 contacts pyridoxal 5'-phosphate; the sequence is LNSH. FMN is bound at residue 72-75; sequence RMVL. Pyridoxal 5'-phosphate is bound at residue lysine 77. FMN-binding positions include 87 to 88, 93 to 94, and glutamine 116; these read YT and RK. 3 residues coordinate pyridoxal 5'-phosphate: tyrosine 134, arginine 138, and serine 142. FMN is bound by residues 151–152 and tryptophan 199; that span reads QS. 205-207 serves as a coordination point for pyridoxal 5'-phosphate; sequence RLH. Residue arginine 209 participates in FMN binding.

Belongs to the pyridoxamine 5'-phosphate oxidase family. Homodimer. Requires FMN as cofactor.

It carries out the reaction pyridoxamine 5'-phosphate + O2 + H2O = pyridoxal 5'-phosphate + H2O2 + NH4(+). It catalyses the reaction pyridoxine 5'-phosphate + O2 = pyridoxal 5'-phosphate + H2O2. The protein operates within cofactor metabolism; pyridoxal 5'-phosphate salvage; pyridoxal 5'-phosphate from pyridoxamine 5'-phosphate: step 1/1. It functions in the pathway cofactor metabolism; pyridoxal 5'-phosphate salvage; pyridoxal 5'-phosphate from pyridoxine 5'-phosphate: step 1/1. Catalyzes the oxidation of either pyridoxine 5'-phosphate (PNP) or pyridoxamine 5'-phosphate (PMP) into pyridoxal 5'-phosphate (PLP). The protein is Putative pyridoxamine 5'-phosphate oxidase of Caenorhabditis elegans.